The primary structure comprises 336 residues: D-alanine--D-alanine ligase (336 aa).

Positions 124–330 constitute an ATP-grasp domain; the sequence is KMWFSALGIP…FTEYLSLVIN (207 aa). 154 to 209 is an ATP binding site; that stretch reads ALENWGSIFVKAASQGSSVGCYKVDDSSKVADVLKDAFGYAPYVIVEKTIKARELE. Mg(2+)-binding residues include aspartate 284, glutamate 297, and asparagine 299.

It belongs to the D-alanine--D-alanine ligase family. The cofactor is Mg(2+). Requires Mn(2+) as cofactor.

The protein localises to the cytoplasm. It catalyses the reaction 2 D-alanine + ATP = D-alanyl-D-alanine + ADP + phosphate + H(+). Its pathway is cell wall biogenesis; peptidoglycan biosynthesis. In terms of biological role, cell wall formation. This is D-alanine--D-alanine ligase from Shewanella sp. (strain ANA-3).